Reading from the N-terminus, the 400-residue chain is Queuine tRNA-ribosyltransferase catalytic subunit (400 aa).

D89 (proton acceptor) is an active-site residue. Residues 89 to 93 (DSGGF), D143, Q185, and G212 each bind substrate. The segment at 243–249 (GVGFPVD) is RNA binding. Residue D262 is the Nucleophile of the active site. Residues 267–271 (TRTAR) form an RNA binding; important for wobble base 34 recognition region. C301, C303, C306, and H331 together coordinate Zn(2+).

Belongs to the queuine tRNA-ribosyltransferase family. In terms of assembly, heterodimer of a catalytic subunit and an accessory subunit. Zn(2+) serves as cofactor.

The protein resides in the cytoplasm. It carries out the reaction guanosine(34) in tRNA + queuine = queuosine(34) in tRNA + guanine. Functionally, catalytic subunit of the queuine tRNA-ribosyltransferase (TGT) that catalyzes the base-exchange of a guanine (G) residue with queuine (Q) at position 34 (anticodon wobble position) in tRNAs with GU(N) anticodons (tRNA-Asp, -Asn, -His and -Tyr), resulting in the hypermodified nucleoside queuosine (7-(((4,5-cis-dihydroxy-2-cyclopenten-1-yl)amino)methyl)-7-deazaguanosine). Catalysis occurs through a double-displacement mechanism. The nucleophile active site attacks the C1' of nucleotide 34 to detach the guanine base from the RNA, forming a covalent enzyme-RNA intermediate. The proton acceptor active site deprotonates the incoming queuine, allowing a nucleophilic attack on the C1' of the ribose to form the product. This is Queuine tRNA-ribosyltransferase catalytic subunit from Caenorhabditis briggsae.